The sequence spans 376 residues: MEPYDVVVNQPVVIDNGSGVIKAGFAGEHIPKCRFPNYIGRPKHVRVMAGALEGDIFVGPKAEEHRGLLSIRYPMEHGIVTDWNDMERIWSYIYSKEQLATFTEDHPVLLTEAPLNPRRNREKAAEFFFEGINAPALFVSMQAVLSLYATGRVTGVVLDSGDGVTHAVPIYEGFAMPHSIMRVDIAGRDVTRYLKTLIRREGFNFRSTAEFEIVRSIKEKVCYLATNPQKEETVETEKFAYKLPDGKIFEIGPARFRAPEVLFRPDLLGEECEGIHDVLMYSIEKSDMDLRKMLYQNIVLSGGSTLFKGFGDRLLSELKKHSAKDLKIRIAAPQERLYSTWMGGSILASLDTFKKMWISKREYEEEGQKAVHRKTF.

It belongs to the actin family. ARP1 subfamily.

The protein resides in the cytoplasm. It localises to the cytoskeleton. This is Actin-related protein 1 (Arp1) from Drosophila melanogaster (Fruit fly).